The following is a 91-amino-acid chain: Protein sigN139 (91 aa).

2 N-linked (GlcNAc...) asparagine glycosylation sites follow: asparagine 23 and asparagine 34. Residues 46-68 traverse the membrane as a helical segment; sequence LLPVVAFISGTVTSITGLVAGAL.

The protein resides in the membrane. In Dictyostelium discoideum (Social amoeba), this protein is Protein sigN139.